The sequence spans 316 residues: Glucan endo-1,3-beta-glucosidase GV (316 aa).

E99 functions as the Proton donor in the catalytic mechanism. The Nucleophile role is filled by E239.

This sequence belongs to the glycosyl hydrolase 17 family.

Its subcellular location is the cytoplasm. The catalysed reaction is Hydrolysis of (1-&gt;3)-beta-D-glucosidic linkages in (1-&gt;3)-beta-D-glucans.. Its function is as follows. May provide a degree of protection against microbial invasion of germinated barley grain through its ability to degrade fungal cell wall polysaccharides. This Hordeum vulgare (Barley) protein is Glucan endo-1,3-beta-glucosidase GV.